The sequence spans 421 residues: Subtilisin-like protease 2 (421 aa).

An N-terminal signal peptide occupies residues 1-16 (MQLLNFGLLLLPFVAG). The propeptide occupies 17 to 122 (DLAPQPEPLL…VHPDQHVYLA (106 aa)). An Inhibitor I9 domain is found at 36-122 (QYIVTLKEGL…VHPDQHVYLA (87 aa)). The 291-residue stretch at 131-421 (RWGLGYMSSK…ERKFTLPKYY (291 aa)) folds into the Peptidase S8 domain. Catalysis depends on charge relay system residues Asp-169 and His-201. N-linked (GlcNAc...) asparagine glycosylation is found at Asn-248, Asn-261, and Asn-348. Catalysis depends on Ser-357, which acts as the Charge relay system. A glycan (N-linked (GlcNAc...) asparagine) is linked at Asn-388.

The protein belongs to the peptidase S8 family.

It localises to the secreted. Functionally, secreted subtilisin-like serine protease with keratinolytic activity that contributes to pathogenicity. The chain is Subtilisin-like protease 2 (SUB2) from Arthroderma benhamiae (strain ATCC MYA-4681 / CBS 112371) (Trichophyton mentagrophytes).